The primary structure comprises 107 residues: Pyrimidine/purine nucleoside phosphorylase (107 aa).

It belongs to the nucleoside phosphorylase PpnP family.

It carries out the reaction a purine D-ribonucleoside + phosphate = a purine nucleobase + alpha-D-ribose 1-phosphate. It catalyses the reaction adenosine + phosphate = alpha-D-ribose 1-phosphate + adenine. The enzyme catalyses cytidine + phosphate = cytosine + alpha-D-ribose 1-phosphate. The catalysed reaction is guanosine + phosphate = alpha-D-ribose 1-phosphate + guanine. It carries out the reaction inosine + phosphate = alpha-D-ribose 1-phosphate + hypoxanthine. It catalyses the reaction thymidine + phosphate = 2-deoxy-alpha-D-ribose 1-phosphate + thymine. The enzyme catalyses uridine + phosphate = alpha-D-ribose 1-phosphate + uracil. The catalysed reaction is xanthosine + phosphate = alpha-D-ribose 1-phosphate + xanthine. Functionally, catalyzes the phosphorolysis of diverse nucleosides, yielding D-ribose 1-phosphate and the respective free bases. Can use uridine, adenosine, guanosine, cytidine, thymidine, inosine and xanthosine as substrates. Also catalyzes the reverse reactions. The chain is Pyrimidine/purine nucleoside phosphorylase from Azoarcus sp. (strain BH72).